A 412-amino-acid polypeptide reads, in one-letter code: Na(+)-translocating NADH-quinone reductase subunit B (412 aa).

3 helical membrane-spanning segments follow: residues 57 to 77 (MILV…NVGL), 127 to 147 (VFFL…EVLF), and 163 to 183 (SILF…ALGI). FMN phosphoryl threonine is present on Thr236. 5 helical membrane passes run 270–290 (GSIG…ILFG), 297–317 (IVAG…VIGS), 322–342 (MFAM…GMMF), 358–378 (WSYG…NPAY), and 381–401 (GMML…YLVV).

It belongs to the NqrB/RnfD family. As to quaternary structure, composed of six subunits; NqrA, NqrB, NqrC, NqrD, NqrE and NqrF. The cofactor is FMN.

Its subcellular location is the cell inner membrane. It carries out the reaction a ubiquinone + n Na(+)(in) + NADH + H(+) = a ubiquinol + n Na(+)(out) + NAD(+). Functionally, NQR complex catalyzes the reduction of ubiquinone-1 to ubiquinol by two successive reactions, coupled with the transport of Na(+) ions from the cytoplasm to the periplasm. NqrA to NqrE are probably involved in the second step, the conversion of ubisemiquinone to ubiquinol. The protein is Na(+)-translocating NADH-quinone reductase subunit B of Klebsiella pneumoniae subsp. pneumoniae (strain ATCC 700721 / MGH 78578).